Reading from the N-terminus, the 94-residue chain is Protein translocase subunit SecE (94 aa).

A disordered region spans residues Met1–Lys32. Basic residues predominate over residues Lys22 to Lys32. Residues Thr65–Phe85 form a helical membrane-spanning segment.

The protein belongs to the SecE/SEC61-gamma family. As to quaternary structure, component of the Sec protein translocase complex. Heterotrimer consisting of SecY, SecE and SecG subunits. The heterotrimers can form oligomers, although 1 heterotrimer is thought to be able to translocate proteins. Interacts with the ribosome. Interacts with SecDF, and other proteins may be involved. Interacts with SecA.

The protein resides in the cell membrane. Its function is as follows. Essential subunit of the Sec protein translocation channel SecYEG. Clamps together the 2 halves of SecY. May contact the channel plug during translocation. The polypeptide is Protein translocase subunit SecE (Streptomyces lividans).